A 248-amino-acid polypeptide reads, in one-letter code: ATP synthase subunit a, chloroplastic (248 aa).

Transmembrane regions (helical) follow at residues 38–58, 96–116, 135–155, 200–220, and 221–241; these read QVLITSWVVIAILLGSAAIAV, VPFIGTLFLFIFVSNWSGALL, INTTVALALPTSVAYFYAGLT, LVVVVLVSLVPLVIPIPVMFL, and GLFTSGIQALIFATLAAAYIG.

Belongs to the ATPase A chain family. As to quaternary structure, F-type ATPases have 2 components, CF(1) - the catalytic core - and CF(0) - the membrane proton channel. CF(1) has five subunits: alpha(3), beta(3), gamma(1), delta(1), epsilon(1). CF(0) has four main subunits: a, b, b' and c.

It localises to the plastid. It is found in the chloroplast thylakoid membrane. Its function is as follows. Key component of the proton channel; it plays a direct role in the translocation of protons across the membrane. This Nymphaea alba (White water-lily) protein is ATP synthase subunit a, chloroplastic.